Consider the following 92-residue polypeptide: Large ribosomal subunit protein bL27 (92 aa).

The interval 1–20 is disordered; that stretch reads MAHKKAGGSTRNGRDSNPKY.

The protein belongs to the bacterial ribosomal protein bL27 family.

The sequence is that of Large ribosomal subunit protein bL27 from Legionella pneumophila (strain Paris).